The chain runs to 184 residues: Protein Syd (184 aa).

This sequence belongs to the Syd family.

It is found in the cell inner membrane. Functionally, interacts with the SecY protein in vivo. May bind preferentially to an uncomplexed state of SecY, thus functioning either as a chelating agent for excess SecY in the cell or as a regulatory factor that negatively controls the translocase function. This chain is Protein Syd, found in Photobacterium profundum (strain SS9).